Reading from the N-terminus, the 143-residue chain is Transcriptional regulator MraZ (143 aa).

SpoVT-AbrB domains are found at residues 5–47 (TYTP…SARE) and 76–119 (ASDE…DSES).

The protein belongs to the MraZ family. As to quaternary structure, forms oligomers.

Its subcellular location is the cytoplasm. The protein localises to the nucleoid. The sequence is that of Transcriptional regulator MraZ from Micrococcus luteus (strain ATCC 4698 / DSM 20030 / JCM 1464 / CCM 169 / CCUG 5858 / IAM 1056 / NBRC 3333 / NCIMB 9278 / NCTC 2665 / VKM Ac-2230) (Micrococcus lysodeikticus).